A 667-amino-acid chain; its full sequence is E3 ubiquitin-protein ligase RNF6 (667 aa).

Disordered regions lie at residues 1 to 25 (MDPSRSRSGGSGEESSFQENERRWQ), 75 to 100 (KEQLASQPGSDSAASDGDSESLRAHS), 116 to 216 (GNVT…QGSF), 295 to 355 (FSSR…TPLS), 396 to 419 (ETRDRDSIANRTRSRAGLAESTVE), 507 to 532 (GDAADDSGQHGRASSQASQAQDGAEM), and 537 to 556 (EPAPPQARPSGSRSRRQLGR). Residues 79 to 90 (ASQPGSDSAASD) show a composition bias toward low complexity. The span at 116-139 (GNVTRSGQNGNQSWRAVSRTNPNS) shows a compositional bias: polar residues. A compositionally biased stretch (basic and acidic residues) spans 150-163 (INPDNRGSEMHGED). Positions 191–200 (SQTSMSSSGP) are enriched in low complexity. Positions 296-327 (SSRSRSPIQRQNGTVHHNSQRQGRPVQQTGRN) are enriched in polar residues. Low complexity predominate over residues 516–530 (HGRASSQASQAQDGA). Ser559 is subject to Phosphoserine. Residues 614–655 (CSVCISDYVAGNKLRQLPCLHEFHIHCIDRWLSENCTCPVCR) form an RING-type; atypical zinc finger.

The protein belongs to the RNF12 family. In terms of tissue distribution, widely expressed with higher expression in the testis in both germ cells and Sertoli cells.

Its subcellular location is the nucleus. The protein localises to the cytoplasm. It is found in the cell projection. It localises to the axon. The protein resides in the PML body. It catalyses the reaction S-ubiquitinyl-[E2 ubiquitin-conjugating enzyme]-L-cysteine + [acceptor protein]-L-lysine = [E2 ubiquitin-conjugating enzyme]-L-cysteine + N(6)-ubiquitinyl-[acceptor protein]-L-lysine.. It participates in protein modification; protein ubiquitination. E3 ubiquitin-protein ligase mediating 'Lys-48'-linked polyubiquitination of LIMK1 and its subsequent targeting to the proteasome for degradation. Negatively regulates axonal outgrowth through regulation of the LIMK1 turnover. Mediates 'Lys-6' and 'Lys-27'-linked polyubiquitination of AR/androgen receptor thereby modulating its transcriptional activity. May also bind DNA and function as a transcriptional regulator. Mediates polyubiquitination of QKI in macrophages, leading to its degradation. The sequence is that of E3 ubiquitin-protein ligase RNF6 from Mus musculus (Mouse).